Here is a 277-residue protein sequence, read N- to C-terminus: Phosphoribosylaminoimidazole-succinocarboxamide synthase (277 aa).

Belongs to the SAICAR synthetase family.

It catalyses the reaction 5-amino-1-(5-phospho-D-ribosyl)imidazole-4-carboxylate + L-aspartate + ATP = (2S)-2-[5-amino-1-(5-phospho-beta-D-ribosyl)imidazole-4-carboxamido]succinate + ADP + phosphate + 2 H(+). The protein operates within purine metabolism; IMP biosynthesis via de novo pathway; 5-amino-1-(5-phospho-D-ribosyl)imidazole-4-carboxamide from 5-amino-1-(5-phospho-D-ribosyl)imidazole-4-carboxylate: step 1/2. This chain is Phosphoribosylaminoimidazole-succinocarboxamide synthase, found in Salinispora arenicola (strain CNS-205).